Reading from the N-terminus, the 248-residue chain is Probable transcriptional regulatory protein Rsph17025_0577 (248 aa).

The segment at 1 to 21 (MAGHSKWANIQHRKGKQDKLR) is disordered.

It belongs to the TACO1 family.

The protein resides in the cytoplasm. The polypeptide is Probable transcriptional regulatory protein Rsph17025_0577 (Cereibacter sphaeroides (strain ATCC 17025 / ATH 2.4.3) (Rhodobacter sphaeroides)).